The sequence spans 1129 residues: Ubiquitin carboxyl-terminal hydrolase 7 (1129 aa).

The interval 1 to 20 (MEIETDQSIEAMDTQDTQEV) is disordered. In terms of domain architecture, MATH spans 101-222 (ETTFSFTVEN…NNSITLEVHV (122 aa)). Residues 241–548 (VGLKNQGATC…NAYMLVYIRQ (308 aa)) form the USP domain. The active-site Nucleophile is the C250. H490 (proton acceptor) is an active-site residue. S1117 carries the phosphoserine modification.

Belongs to the peptidase C19 family.

The protein localises to the nucleus. The enzyme catalyses Thiol-dependent hydrolysis of ester, thioester, amide, peptide and isopeptide bonds formed by the C-terminal Gly of ubiquitin (a 76-residue protein attached to proteins as an intracellular targeting signal).. In terms of biological role, hydrolase that deubiquitinates target proteins. This chain is Ubiquitin carboxyl-terminal hydrolase 7 (Usp7), found in Drosophila melanogaster (Fruit fly).